Reading from the N-terminus, the 219-residue chain is uncharacterized protein (219 aa).

Positions 1-17 are enriched in low complexity; that stretch reads MIINNQNSPQSINTPSS. Residues 1 to 31 form a disordered region; sequence MIINNQNSPQSINTPSSVSSRQHINKSKKKK. Helical transmembrane passes span 49-69 and 83-105; these read SLAT…LVCK and LVYR…SYIG. Positions 135–219 are disordered; the sequence is NHRSPIPLTN…NSDLEIPIPI (85 aa). Over residues 144–212 the composition is skewed to low complexity; sequence NLNNNNNNNN…SNNNNDNNSD (69 aa).

The protein localises to the membrane. This is an uncharacterized protein from Dictyostelium discoideum (Social amoeba).